A 409-amino-acid polypeptide reads, in one-letter code: Lissencephaly-1 homolog (409 aa).

Positions 7–39 constitute a LisH domain; sequence QKEELNKAIADYLHQCGFEDTLNAFKQDANMPG. Residues 54 to 80 are a coiled coil; that stretch reads TSVIRLQKKVMDLETRLSEAEKEVHHG. The interval 72-95 is disordered; sequence EAEKEVHHGGGPKKTRSPEDWIPR. WD repeat units lie at residues 104–145, 146–187, 188–229, 231–269, 272–332, 335–374, and 377–409; these read GHRS…RTLK, GHTD…RTLH, GHDH…KTFQ, HGEWVRRVRPNADGSLIASCSNDQTIRVWVVASRECKCD, DHDH…CLVT, GHDNWVRAVMFHPGGKFIVSCSDDKTLRIWDYKNKRCAKT, and AHEHFVTTLDFHKSAPFVATGSVDLTLKVWECR.

This sequence belongs to the WD repeat LIS1/nudF family.

It localises to the cytoplasm. The protein localises to the cytoskeleton. It is found in the microtubule organizing center. The protein resides in the centrosome. Functionally, positively regulates the activity of the minus-end directed microtubule motor protein dynein. May enhance dynein-mediated microtubule sliding by targeting dynein to the microtubule plus end. Required for several dynein- and microtubule-dependent processes. This is Lissencephaly-1 homolog from Nematostella vectensis (Starlet sea anemone).